Consider the following 149-residue polypeptide: Calmodulin (149 aa).

EF-hand domains lie at glutamate 8–asparagine 43, proline 44–aspartate 79, aspartate 81–lysine 116, and leucine 117–lysine 149. Ca(2+) is bound by residues aspartate 21, aspartate 23, aspartate 25, asparagine 27, glutamate 32, aspartate 57, aspartate 59, asparagine 61, threonine 63, glutamate 68, aspartate 94, aspartate 96, asparagine 98, and glutamate 105. Residue lysine 116 is modified to N6,N6,N6-trimethyllysine. Aspartate 130, aspartate 132, aspartate 134, glutamine 136, and glutamate 141 together coordinate Ca(2+).

It belongs to the calmodulin family.

Calmodulin mediates the control of a large number of enzymes, ion channels and other proteins by Ca(2+). Among the enzymes to be stimulated by the calmodulin-Ca(2+) complex are a number of protein kinases and phosphatases. This chain is Calmodulin, found in Physarum polycephalum (Slime mold).